A 204-amino-acid chain; its full sequence is Methylthioribulose-1-phosphate dehydratase (204 aa).

2 residues coordinate Zn(2+): His94 and His96.

Belongs to the aldolase class II family. MtnB subfamily. Zn(2+) serves as cofactor.

The enzyme catalyses 5-(methylsulfanyl)-D-ribulose 1-phosphate = 5-methylsulfanyl-2,3-dioxopentyl phosphate + H2O. It participates in amino-acid biosynthesis; L-methionine biosynthesis via salvage pathway; L-methionine from S-methyl-5-thio-alpha-D-ribose 1-phosphate: step 2/6. Its function is as follows. Catalyzes the dehydration of methylthioribulose-1-phosphate (MTRu-1-P) into 2,3-diketo-5-methylthiopentyl-1-phosphate (DK-MTP-1-P). The protein is Methylthioribulose-1-phosphate dehydratase of Pseudomonas savastanoi pv. phaseolicola (strain 1448A / Race 6) (Pseudomonas syringae pv. phaseolicola (strain 1448A / Race 6)).